Here is a 457-residue protein sequence, read N- to C-terminus: DDB1- and CUL4-associated factor 10 (457 aa).

4 WD repeats span residues Arg65–Thr104, Ala108–Cys146, Gly150–Cys189, and Phe195–Glu234. Positions Thr246–Pro265 are enriched in low complexity. Residues Thr246–Glu304 form a disordered region. Residues Arg281 to Asn292 show a composition bias toward polar residues. WD repeat units follow at residues Asp306–Ala346, Val368–Val406, and Ser424–Phe457.

It belongs to the WD repeat DCAF10 family.

It participates in protein modification; protein ubiquitination. Functionally, may function as a substrate receptor for CUL4-DDB1 E3 ubiquitin-protein ligase complex. This is DDB1- and CUL4-associated factor 10 (dcaf10) from Xenopus tropicalis (Western clawed frog).